The following is a 141-amino-acid chain: Nucleoside diphosphate kinase (141 aa).

Residues K11, F59, R87, T93, R104, and N114 each contribute to the ATP site. H117 (pros-phosphohistidine intermediate) is an active-site residue.

The protein belongs to the NDK family. As to quaternary structure, homotetramer. It depends on Mg(2+) as a cofactor.

Its subcellular location is the cytoplasm. The enzyme catalyses a 2'-deoxyribonucleoside 5'-diphosphate + ATP = a 2'-deoxyribonucleoside 5'-triphosphate + ADP. The catalysed reaction is a ribonucleoside 5'-diphosphate + ATP = a ribonucleoside 5'-triphosphate + ADP. Its function is as follows. Major role in the synthesis of nucleoside triphosphates other than ATP. The ATP gamma phosphate is transferred to the NDP beta phosphate via a ping-pong mechanism, using a phosphorylated active-site intermediate. In Cupriavidus pinatubonensis (strain JMP 134 / LMG 1197) (Cupriavidus necator (strain JMP 134)), this protein is Nucleoside diphosphate kinase.